Here is a 418-residue protein sequence, read N- to C-terminus: Acyl-coenzyme A amino acid N-acyltransferase 2 (418 aa).

Residues Ser234, Asp327, and His361 each act as charge relay system in the active site. A Microbody targeting signal motif is present at residues 416–418 (GKL).

The protein belongs to the C/M/P thioester hydrolase family.

Its subcellular location is the peroxisome. In terms of biological role, acyltransferase which efficiently conjugates very long-chain and long-chain fatty acids to taurine. Shows no conjugation activity in the presence of glycine. The polypeptide is Acyl-coenzyme A amino acid N-acyltransferase 2 (Rattus norvegicus (Rat)).